Here is a 473-residue protein sequence, read N- to C-terminus: Probable DNA N(6)-methyladenine demethylase ALKBH1B (473 aa).

2-oxoglutarate is bound at residue 357–359 (NFY). Residues H368, D391, and H449 each coordinate Fe cation. A 2-oxoglutarate-binding site is contributed by 461–465 (RLFFR).

This sequence belongs to the alkB family. It depends on Fe(2+) as a cofactor. As to expression, undetectable.

It catalyses the reaction an N(6)-methyl-2'-deoxyadenosine in DNA + 2-oxoglutarate + O2 = a 2'-deoxyadenosine in DNA + formaldehyde + succinate + CO2. Dioxygenase that may catalyzes DNA N(6)-methyladenine (6 mA) demethylation. Requires molecular oxygen, alpha-ketoglutarate and iron. In Arabidopsis thaliana (Mouse-ear cress), this protein is Probable DNA N(6)-methyladenine demethylase ALKBH1B.